A 66-amino-acid chain; its full sequence is MAIVPKRKTSKQRKHKRRTNDALPVQNLISCKNCSNMIQQHRVCEHCGFYKGKKVEGYKSLNLRAQ.

The segment covering 1–18 (MAIVPKRKTSKQRKHKRR) has biased composition (basic residues). The segment at 1–21 (MAIVPKRKTSKQRKHKRRTND) is disordered.

This sequence belongs to the bacterial ribosomal protein bL32 family.

This chain is Large ribosomal subunit protein bL32, found in Mycoplasmopsis agalactiae (strain NCTC 10123 / CIP 59.7 / PG2) (Mycoplasma agalactiae).